A 1280-amino-acid polypeptide reads, in one-letter code: Rho guanine nucleotide exchange factor 10-like protein (1280 aa).

Residues 1 to 10 (MASSNPPPQP) show a composition bias toward pro residues. A disordered region spans residues 1-94 (MASSNPPPQP…TEAPTVVSNG (94 aa)). Residues 26 to 46 (EVEEDSGEAFEFDDSDEEEDT) are compositionally biased toward acidic residues. Serine 40 bears the Phosphoserine mark. Residues 78–89 (PAAAPPQTEAPT) are compositionally biased toward low complexity. Residues tyrosine 131 and tyrosine 152 each carry the phosphotyrosine modification. The segment at 161 to 202 (PRETEDLGWSSSEFESYSEDSGEETKPEAEPTKHRGSFQPKL) is disordered. The span at 183-193 (EETKPEAEPTK) shows a compositional bias: basic and acidic residues. Serine 279 bears the Phosphoserine mark. Residues 314–501 (VRRHILGSIV…ETLAEKLNEQ (188 aa)) enclose the DH domain. 2 disordered regions span residues 1133-1163 (QEEAEGPQAEEDKPDGQAHETVPGPDSHTAR) and 1186-1207 (PLLSVREPAPADGSALEHSEED).

As to quaternary structure, interacts with RHOA, RHOB and RHOC.

It is found in the cytoplasm. Its function is as follows. Acts as a guanine nucleotide exchange factor (GEF) for RHOA, RHOB and RHOC. The chain is Rho guanine nucleotide exchange factor 10-like protein (Arhgef10l) from Mus musculus (Mouse).